Consider the following 277-residue polypeptide: Phosphate import ATP-binding protein PstB 1 (277 aa).

One can recognise an ABC transporter domain in the interval 27–272 (LRVRDLAVSY…PSHELTAAYI (246 aa)). 59–66 (GPSGCGKT) is an ATP binding site.

Belongs to the ABC transporter superfamily. Phosphate importer (TC 3.A.1.7) family. As to quaternary structure, the complex is composed of two ATP-binding proteins (PstB), two transmembrane proteins (PstC and PstA) and a solute-binding protein (PstS).

The protein localises to the cell inner membrane. It catalyses the reaction phosphate(out) + ATP + H2O = ADP + 2 phosphate(in) + H(+). Functionally, part of the ABC transporter complex PstSACB involved in phosphate import. Responsible for energy coupling to the transport system. This chain is Phosphate import ATP-binding protein PstB 1, found in Nitrosococcus oceani (strain ATCC 19707 / BCRC 17464 / JCM 30415 / NCIMB 11848 / C-107).